The following is a 339-amino-acid chain: Cathepsin B (339 aa).

The N-terminal stretch at 1–17 is a signal peptide; sequence MWWSLILLSCLLALTSA. Residues 18-79 constitute a propeptide, activation peptide; sequence HDKPSFHPLS…GRVAFGEDID (62 aa). Cystine bridges form between Cys93–Cys122, Cys105–Cys150, Cys141–Cys207, Cys142–Cys146, Cys179–Cys211, and Cys187–Cys198. Cys108 is an active-site residue. An N-linked (GlcNAc...) asparagine glycan is attached at Asn192. Lys220 is subject to N6-acetyllysine. Active-site residues include His278 and Asn298. A propeptide spanning residues 334 to 339 is cleaved from the precursor; sequence QYWGRF.

It belongs to the peptidase C1 family. Dimer of a heavy chain and a light chain cross-linked by a disulfide bond. Interacts with SRPX2. Directly interacts with SHKBP1. In terms of tissue distribution, expressed in thyroid epithelial cells.

Its subcellular location is the lysosome. The protein resides in the melanosome. It is found in the secreted. It localises to the extracellular space. The protein localises to the apical cell membrane. It carries out the reaction Hydrolysis of proteins with broad specificity for peptide bonds. Preferentially cleaves -Arg-Arg-|-Xaa bonds in small molecule substrates (thus differing from cathepsin L). In addition to being an endopeptidase, shows peptidyl-dipeptidase activity, liberating C-terminal dipeptides.. Thiol protease which is believed to participate in intracellular degradation and turnover of proteins. Cleaves matrix extracellular phosphoglycoprotein MEPE. Involved in the solubilization of cross-linked TG/thyroglobulin in the thyroid follicle lumen. Has also been implicated in tumor invasion and metastasis. In Mus musculus (Mouse), this protein is Cathepsin B (Ctsb).